Reading from the N-terminus, the 162-residue chain is UPF0178 protein Rsph17029_2512 (162 aa).

Belongs to the UPF0178 family.

This chain is UPF0178 protein Rsph17029_2512, found in Cereibacter sphaeroides (strain ATCC 17029 / ATH 2.4.9) (Rhodobacter sphaeroides).